The following is a 178-amino-acid chain: Cytochrome b6-f complex iron-sulfur subunit (178 aa).

A helical membrane pass occupies residues 20 to 42 (LLTFGTATGVALGALYPVANYFM). The Rieske domain maps to 65–161 (KTGWLANHQA…VDVDDDAVLV (97 aa)). [2Fe-2S] cluster contacts are provided by C107, H109, C125, and H128. C112 and C127 are disulfide-bonded.

The protein belongs to the Rieske iron-sulfur protein family. As to quaternary structure, the 4 large subunits of the cytochrome b6-f complex are cytochrome b6, subunit IV (17 kDa polypeptide, PetD), cytochrome f and the Rieske protein, while the 4 small subunits are PetG, PetL, PetM and PetN. The complex functions as a dimer. [2Fe-2S] cluster serves as cofactor.

It is found in the cellular thylakoid membrane. It carries out the reaction 2 oxidized [plastocyanin] + a plastoquinol + 2 H(+)(in) = 2 reduced [plastocyanin] + a plastoquinone + 4 H(+)(out). In terms of biological role, component of the cytochrome b6-f complex, which mediates electron transfer between photosystem II (PSII) and photosystem I (PSI), cyclic electron flow around PSI, and state transitions. This Prochlorococcus marinus (strain MIT 9515) protein is Cytochrome b6-f complex iron-sulfur subunit.